Here is a 272-residue protein sequence, read N- to C-terminus: MKVIMTTKTDLASMNIMEKLVENFGFKETDRLFDGNPVYSKGDTLILTTNDEMIYYDNLDKAIEHQLGLVPEIIVFASRHSSKQKLPALTTHITGNWGNAMYGGKDESLAIAQPSAMKLALLKMNELNDLNWIICYEATHHGPSELNVPSLFIEIGSSEEEWVNDRAGDILAETITYVLDKYRETKFPVAIGIGGGHYAPKQTKRALETDLAFSHIAPKYVHPLKKELILKAIERTAEKVDAIYVDWKGSKGETRQMAKALAEELGLEFIRD.

The protein belongs to the DtdA deacylase family. As to quaternary structure, monomer. The cofactor is Zn(2+).

It catalyses the reaction a D-aminoacyl-tRNA + H2O = a tRNA + a D-alpha-amino acid + H(+). The enzyme catalyses glycyl-tRNA(Ala) + H2O = tRNA(Ala) + glycine + H(+). D-aminoacyl-tRNA deacylase with broad substrate specificity. By recycling D-aminoacyl-tRNA to D-amino acids and free tRNA molecules, this enzyme counteracts the toxicity associated with the formation of D-aminoacyl-tRNA entities in vivo. This Thermococcus onnurineus (strain NA1) protein is D-aminoacyl-tRNA deacylase.